Consider the following 468-residue polypeptide: Tyramine receptor tyra-2 (468 aa).

At 1–23 (MMSSYVMSPVDETYTLFQILKGS) the chain is on the extracellular side. Residues 24 to 43 (ALFLLVLWTIFANSLVFIVL) traverse the membrane as a helical segment. At 44–54 (YKNPRLQTVPN) the chain is on the cytoplasmic side. The helical transmembrane segment at 55–77 (LLVGNLAFSDLALGLIVLPLSSV) threads the bilayer. Residues 78–91 (YAIAGEWVFPDALC) are Extracellular-facing. Cys91 and Cys177 are disulfide-bonded. Residues 92-114 (EVFVSADILCSTASIWNLSIVGL) form a helical membrane-spanning segment. The Cytoplasmic segment spans residues 115-134 (DRYWAITSPVAYMSKRNKRT). Residues 135 to 157 (AGIMILSVWISSALISLAPLLGW) form a helical membrane-spanning segment. Residues 158–186 (KQTAQTPNLIYEKNNTVRQCTFLDLPSYT) are Extracellular-facing. An N-linked (GlcNAc...) asparagine glycan is attached at Asn171. The chain crosses the membrane as a helical span at residues 187–209 (VYSATGSFFIPTLLMFFVYFKIY). The Cytoplasmic portion of the chain corresponds to 210 to 387 (QAFAKHRARQ…SAAKERRGVK (178 aa)). Positions 252 to 306 (DEFAKEEEEEEDSESSGQVENGLGNGNDAIIEEDECEDEDSDEKRDDHTSMTTVT) are disordered. Acidic residues-rich tracts occupy residues 255 to 265 (AKEEEEEEDSE) and 281 to 292 (IIEEDECEDEDS). The chain crosses the membrane as a helical span at residues 388 to 410 (VLGIILGCFTVCWAPFFTMYVLV). Residues 411-424 (QFCKDCSPNAHIEM) are Extracellular-facing. The chain crosses the membrane as a helical span at residues 425-444 (FITWLGYSNSAMNPIIYTVF). The Cytoplasmic portion of the chain corresponds to 445–468 (NRDYQIALKRLFTSEKKPSSTSRV).

Belongs to the G-protein coupled receptor 1 family. In terms of tissue distribution, expressed in the pharyngeal neurons, MCL/R and NSML/R and the AS group of amphidial sensory neurons, ASEL/R, AGSL/R, ASHL/R and ASIL/R.

Its subcellular location is the cell membrane. Its function is as follows. G-protein coupled receptor for tyramine, a known neurotransmitter and neuromodulator and direct precursor of octopamine. Expression in amphidial sensory neurons suggests a role in chemosensation. The sequence is that of Tyramine receptor tyra-2 (tyra-2) from Caenorhabditis elegans.